We begin with the raw amino-acid sequence, 255 residues long: Lipoprotein-releasing system ATP-binding protein LolD 2 (255 aa).

Residues 9 to 254 form the ABC transporter domain; that stretch reads LEARGIRKSY…SDSAKLETVA (246 aa). Position 45–52 (45–52) interacts with ATP; that stretch reads GRSGSGKS.

This sequence belongs to the ABC transporter superfamily. Lipoprotein translocase (TC 3.A.1.125) family. In terms of assembly, the complex is composed of two ATP-binding proteins (LolD) and two transmembrane proteins (LolC and LolE).

It is found in the cell inner membrane. Part of the ABC transporter complex LolCDE involved in the translocation of mature outer membrane-directed lipoproteins, from the inner membrane to the periplasmic chaperone, LolA. Responsible for the formation of the LolA-lipoprotein complex in an ATP-dependent manner. The chain is Lipoprotein-releasing system ATP-binding protein LolD 2 from Rhodopirellula baltica (strain DSM 10527 / NCIMB 13988 / SH1).